The chain runs to 304 residues: N-acetylmuramic acid 6-phosphate etherase (304 aa).

Residues 62–225 form the SIS domain; the sequence is IVQAFQNGGR…TTASMVMIGK (164 aa). The active-site Proton donor is Glu-90. Glu-121 is a catalytic residue.

Belongs to the GCKR-like family. MurNAc-6-P etherase subfamily. In terms of assembly, homodimer.

The enzyme catalyses N-acetyl-D-muramate 6-phosphate + H2O = N-acetyl-D-glucosamine 6-phosphate + (R)-lactate. It participates in amino-sugar metabolism; 1,6-anhydro-N-acetylmuramate degradation. Its pathway is amino-sugar metabolism; N-acetylmuramate degradation. It functions in the pathway cell wall biogenesis; peptidoglycan recycling. Functionally, specifically catalyzes the cleavage of the D-lactyl ether substituent of MurNAc 6-phosphate, producing GlcNAc 6-phosphate and D-lactate. Together with AnmK, is also required for the utilization of anhydro-N-acetylmuramic acid (anhMurNAc) either imported from the medium or derived from its own cell wall murein, and thus plays a role in cell wall recycling. The polypeptide is N-acetylmuramic acid 6-phosphate etherase (Actinobacillus pleuropneumoniae serotype 7 (strain AP76)).